The sequence spans 334 residues: Probable tRNA pseudouridine synthase B (334 aa).

Catalysis depends on D82, which acts as the Nucleophile. One can recognise a PUA domain in the interval 250 to 325 (LPKVWIRDSA…IAVDVDKVFM (76 aa)).

It belongs to the pseudouridine synthase TruB family. Type 2 subfamily.

The enzyme catalyses uridine(55) in tRNA = pseudouridine(55) in tRNA. Its function is as follows. Could be responsible for synthesis of pseudouridine from uracil-55 in the psi GC loop of transfer RNAs. The chain is Probable tRNA pseudouridine synthase B from Thermococcus onnurineus (strain NA1).